Consider the following 199-residue polypeptide: dITP/XTP pyrophosphatase (199 aa).

7 to 12 (SNNRGK) contributes to the substrate binding site. Mg(2+) contacts are provided by aspartate 39 and aspartate 68. Aspartate 68 acts as the Proton acceptor in catalysis. Residues alanine 69, 154–157 (FGFD), lysine 177, and 182–183 (HR) contribute to the substrate site.

Belongs to the HAM1 NTPase family. As to quaternary structure, homodimer. Mg(2+) serves as cofactor.

The catalysed reaction is XTP + H2O = XMP + diphosphate + H(+). It catalyses the reaction dITP + H2O = dIMP + diphosphate + H(+). It carries out the reaction ITP + H2O = IMP + diphosphate + H(+). Its function is as follows. Pyrophosphatase that catalyzes the hydrolysis of nucleoside triphosphates to their monophosphate derivatives, with a high preference for the non-canonical purine nucleotides XTP (xanthosine triphosphate), dITP (deoxyinosine triphosphate) and ITP. Seems to function as a house-cleaning enzyme that removes non-canonical purine nucleotides from the nucleotide pool, thus preventing their incorporation into DNA/RNA and avoiding chromosomal lesions. This is dITP/XTP pyrophosphatase from Paracidovorax citrulli (strain AAC00-1) (Acidovorax citrulli).